We begin with the raw amino-acid sequence, 198 residues long: MEHYLSLFVKSIFIENLALSFFLGMCTFLAVSKKVKTAMGLGIAVVVVQAIAVPANNLVFTYVLKENALVQGMDLTFLGFITYIGVIAALVQILEMFLDRYVPSLYSALGIFLPLITVNCAIFGGVSFMVQREYNFPESVVYGVGSGISWALAIVLMAAIREKMKYSDVPPGLRGLGITFITAGLMALGFMSFSGISL.

Helical transmembrane passes span 11 to 31, 40 to 60, 77 to 97, 110 to 130, 140 to 160, and 176 to 196; these read SIFI…FLAV, GLGI…NLVF, FLGF…LEMF, GIFL…SFMV, VVYG…MAAI, and LGIT…FSGI.

This sequence belongs to the NqrDE/RnfAE family. In terms of assembly, composed of six subunits; NqrA, NqrB, NqrC, NqrD, NqrE and NqrF.

The protein resides in the cell inner membrane. It carries out the reaction a ubiquinone + n Na(+)(in) + NADH + H(+) = a ubiquinol + n Na(+)(out) + NAD(+). In terms of biological role, NQR complex catalyzes the reduction of ubiquinone-1 to ubiquinol by two successive reactions, coupled with the transport of Na(+) ions from the cytoplasm to the periplasm. NqrA to NqrE are probably involved in the second step, the conversion of ubisemiquinone to ubiquinol. This chain is Na(+)-translocating NADH-quinone reductase subunit E, found in Tolumonas auensis (strain DSM 9187 / NBRC 110442 / TA 4).